The following is a 110-amino-acid chain: Transcription factor S (110 aa).

8 residues coordinate Zn(2+): cysteine 4, cysteine 7, cysteine 22, cysteine 25, cysteine 71, cysteine 74, cysteine 99, and cysteine 102. A TFIIS-type zinc finger spans residues 67-107 (TKVTCPKCGNDTAYWWEMQTRAGDEPSTIFYKCTKCGYTWR).

The protein belongs to the archaeal rpoM/eukaryotic RPA12/RPB9/RPC11 RNA polymerase family.

Its subcellular location is the chromosome. Involved in transcriptional proofreading and fidelity. Induces RNA cleavage activity in RNA polymerase (RNAP). Stimulates transcription elongation by RNAP on both naked DNA and histone-bound DNA (chromatin), facilitating transcription through the histone barrier. Stimulation depends on transcript cleavage. In the presence of TFS, the cleavage activity of RNAP truncates RNA back to position +15 in a stepwise manner by releasing mainly dinucleotides from the 3'-end of the nascent RNA. The truncated RNAs are able to continue elongation. Misincorporation of nucleotides during elongation of transcription leads to arrested elongation complexes which are rescued by TFS-promoted removal of a dinucleotide from the 3'-end. TFS is able to induce a cleavage resynthesis cycle in stalled elongation complexes (resulting from the next missing nucleotide or a reduced incorporation rate of a wrong nucleotide) preventing misincorporation and enabling proofreading in a post-incorporation manner. Pausing of elongation complexes is the main determinant of TFS-induced RNA cleavage. The protein is Transcription factor S of Thermococcus kodakarensis (strain ATCC BAA-918 / JCM 12380 / KOD1) (Pyrococcus kodakaraensis (strain KOD1)).